The primary structure comprises 208 residues: ATP-dependent Clp protease proteolytic subunit (208 aa).

The Nucleophile role is filled by Ser-107. His-132 is an active-site residue.

Belongs to the peptidase S14 family. As to quaternary structure, fourteen ClpP subunits assemble into 2 heptameric rings which stack back to back to give a disk-like structure with a central cavity, resembling the structure of eukaryotic proteasomes.

It localises to the cytoplasm. The enzyme catalyses Hydrolysis of proteins to small peptides in the presence of ATP and magnesium. alpha-casein is the usual test substrate. In the absence of ATP, only oligopeptides shorter than five residues are hydrolyzed (such as succinyl-Leu-Tyr-|-NHMec, and Leu-Tyr-Leu-|-Tyr-Trp, in which cleavage of the -Tyr-|-Leu- and -Tyr-|-Trp bonds also occurs).. Functionally, cleaves peptides in various proteins in a process that requires ATP hydrolysis. Has a chymotrypsin-like activity. Plays a major role in the degradation of misfolded proteins. The protein is ATP-dependent Clp protease proteolytic subunit of Methylobacterium radiotolerans (strain ATCC 27329 / DSM 1819 / JCM 2831 / NBRC 15690 / NCIMB 10815 / 0-1).